Reading from the N-terminus, the 115-residue chain is Large ribosomal subunit protein bL19 (115 aa).

Belongs to the bacterial ribosomal protein bL19 family.

In terms of biological role, this protein is located at the 30S-50S ribosomal subunit interface and may play a role in the structure and function of the aminoacyl-tRNA binding site. This chain is Large ribosomal subunit protein bL19, found in Brevibacillus brevis (strain 47 / JCM 6285 / NBRC 100599).